The chain runs to 425 residues: Adenosylhomocysteinase (425 aa).

Substrate contacts are provided by T60, D132, and E157. NAD(+) is bound at residue 158 to 160 (TTT). Substrate is bound by residues K187 and D191. NAD(+)-binding positions include N192, 221-226 (GYGWCG), E244, N279, 300-302 (SGH), and N347.

The protein belongs to the adenosylhomocysteinase family. NAD(+) serves as cofactor.

It is found in the cytoplasm. It catalyses the reaction S-adenosyl-L-homocysteine + H2O = L-homocysteine + adenosine. Its pathway is amino-acid biosynthesis; L-homocysteine biosynthesis; L-homocysteine from S-adenosyl-L-homocysteine: step 1/1. May play a key role in the regulation of the intracellular concentration of adenosylhomocysteine. The chain is Adenosylhomocysteinase from Synechocystis sp. (strain ATCC 27184 / PCC 6803 / Kazusa).